Reading from the N-terminus, the 179-residue chain is MAQFSESADVPDMGRRQFMNLLTFGTVTGVALGALYPVVKYFIPPASGGAGGGTTAKDELGNDVSLSKFLENRNAGDRALVQGLKGDPTYIVVENKQAIKDYGINAICTHLGCVVPWNVAENKFKCPCHGSQYDETGKVVRGPAPLSLALAHANTVDDKIILSPWTETDFRTGDAPWWA.

The chain crosses the membrane as a helical span at residues 21-43; the sequence is LLTFGTVTGVALGALYPVVKYFI. The region spanning 61-162 is the Rieske domain; the sequence is GNDVSLSKFL…ANTVDDKIIL (102 aa). Residues Cys108, His110, Cys126, and His129 each contribute to the [2Fe-2S] cluster site. Cysteines 113 and 128 form a disulfide.

The protein belongs to the Rieske iron-sulfur protein family. In terms of assembly, the 4 large subunits of the cytochrome b6-f complex are cytochrome b6, subunit IV (17 kDa polypeptide, PetD), cytochrome f and the Rieske protein, while the 4 small subunits are PetG, PetL, PetM and PetN. The complex functions as a dimer. Requires [2Fe-2S] cluster as cofactor.

Its subcellular location is the cellular thylakoid membrane. It catalyses the reaction 2 oxidized [plastocyanin] + a plastoquinol + 2 H(+)(in) = 2 reduced [plastocyanin] + a plastoquinone + 4 H(+)(out). Functionally, component of the cytochrome b6-f complex, which mediates electron transfer between photosystem II (PSII) and photosystem I (PSI), cyclic electron flow around PSI, and state transitions. This Desmonostoc sp. (strain PCC 7906) (Nostoc sp. (strain PCC 7906)) protein is Cytochrome b6-f complex iron-sulfur subunit.